Reading from the N-terminus, the 666-residue chain is Transketolase (666 aa).

His-28 contacts substrate. Thiamine diphosphate-binding positions include His-68 and 116–118 (GPL). Asp-157 is a binding site for Mg(2+). Residues Gly-158 and Asn-187 each coordinate thiamine diphosphate. Mg(2+)-binding residues include Asn-187 and Ile-189. His-262, Arg-356, and Ser-383 together coordinate substrate. Position 262 (His-262) interacts with thiamine diphosphate. Glu-410 serves as the catalytic Proton donor. Phe-436 contributes to the thiamine diphosphate binding site. Substrate is bound by residues His-460, Asp-468, and Arg-519.

Belongs to the transketolase family. Homodimer. Mg(2+) serves as cofactor. Requires Ca(2+) as cofactor. It depends on Mn(2+) as a cofactor. The cofactor is Co(2+). Thiamine diphosphate is required as a cofactor.

The catalysed reaction is D-sedoheptulose 7-phosphate + D-glyceraldehyde 3-phosphate = aldehydo-D-ribose 5-phosphate + D-xylulose 5-phosphate. Its function is as follows. Catalyzes the transfer of a two-carbon ketol group from a ketose donor to an aldose acceptor, via a covalent intermediate with the cofactor thiamine pyrophosphate. This is Transketolase (tkt) from Halalkalibacterium halodurans (strain ATCC BAA-125 / DSM 18197 / FERM 7344 / JCM 9153 / C-125) (Bacillus halodurans).